A 607-amino-acid chain; its full sequence is Glutamine--fructose-6-phosphate aminotransferase [isomerizing] (607 aa).

Cys2 serves as the catalytic Nucleophile; for GATase activity. A Glutamine amidotransferase type-2 domain is found at 2-218; sequence CGIIGYSGSK…DGDVVLVTKD (217 aa). SIS domains are found at residues 280–424 and 457–597; these read FDEQ…KLGK and IAKK…VDKP. Lys602 functions as the For Fru-6P isomerization activity in the catalytic mechanism.

As to quaternary structure, homodimer.

Its subcellular location is the cytoplasm. It carries out the reaction D-fructose 6-phosphate + L-glutamine = D-glucosamine 6-phosphate + L-glutamate. Its function is as follows. Catalyzes the first step in hexosamine metabolism, converting fructose-6P into glucosamine-6P using glutamine as a nitrogen source. The chain is Glutamine--fructose-6-phosphate aminotransferase [isomerizing] from Fusobacterium nucleatum subsp. nucleatum (strain ATCC 25586 / DSM 15643 / BCRC 10681 / CIP 101130 / JCM 8532 / KCTC 2640 / LMG 13131 / VPI 4355).